Consider the following 387-residue polypeptide: Phosphoglycerate kinase (387 aa).

Substrate is bound by residues 21-23 (DLN), arginine 36, 59-62 (HLGR), arginine 113, and arginine 146. ATP contacts are provided by residues lysine 197, glutamate 314, and 340-343 (GGDT).

It belongs to the phosphoglycerate kinase family. Monomer.

The protein localises to the cytoplasm. It carries out the reaction (2R)-3-phosphoglycerate + ATP = (2R)-3-phospho-glyceroyl phosphate + ADP. It functions in the pathway carbohydrate degradation; glycolysis; pyruvate from D-glyceraldehyde 3-phosphate: step 2/5. The protein is Phosphoglycerate kinase of Pseudomonas putida (strain ATCC 47054 / DSM 6125 / CFBP 8728 / NCIMB 11950 / KT2440).